The following is a 316-amino-acid chain: tRNA methyltransferase 10 homolog B (316 aa).

Residues glutamate 73–asparagine 97 are a coiled coil. The tract at residues alanine 77–proline 98 is disordered. The SAM-dependent MTase TRM10-type domain maps to threonine 113–isoleucine 310.

It belongs to the class IV-like SAM-binding methyltransferase superfamily. TRM10 family.

The catalysed reaction is guanosine(9) in tRNA + S-adenosyl-L-methionine = N(1)-methylguanosine(9) in tRNA + S-adenosyl-L-homocysteine + H(+). Its function is as follows. S-adenosyl-L-methionine-dependent guanine N(1)-methyltransferase that catalyzes the formation of N(1)-methylguanine at position 9 (m1G9) in tRNAs. Probably not able to catalyze formation of N(1)-methyladenine at position 9 (m1A9) in tRNAs. This Homo sapiens (Human) protein is tRNA methyltransferase 10 homolog B (TRMT10B).